We begin with the raw amino-acid sequence, 173 residues long: Dirigent protein 8 (173 aa).

Residues 1-22 (MTNLILIFAAQILLFYAVASVG) form the signal peptide. Residues asparagine 69, asparagine 90, and asparagine 125 are each glycosylated (N-linked (GlcNAc...) asparagine).

Belongs to the plant dirigent protein family. Homodimer.

The protein resides in the secreted. It is found in the extracellular space. It localises to the apoplast. In terms of biological role, dirigent proteins impart stereoselectivity on the phenoxy radical-coupling reaction, yielding optically active lignans from two molecules of coniferyl alcohol in the biosynthesis of lignans, flavonolignans, and alkaloids and thus plays a central role in plant secondary metabolism. This is Dirigent protein 8 (DIR8) from Arabidopsis thaliana (Mouse-ear cress).